We begin with the raw amino-acid sequence, 113 residues long: MHELALTAELLRLLENNAREKGIKHIKRVKLVIGALSSVLPEAVEFSFNTLKEGPLFEDAKLEIEEKPVRIRCRDCMAEKAVDHFYPLCPSCGSGRVSIIEGKEFYIDFYEGE.

His-2 is a binding site for Ni(2+). Residues Cys-73, Cys-76, Cys-89, and Cys-92 each contribute to the Zn(2+) site.

The protein belongs to the HypA/HybF family.

Its function is as follows. Involved in the maturation of [NiFe] hydrogenases. Required for nickel insertion into the metal center of the hydrogenase. This Moorella thermoacetica (strain ATCC 39073 / JCM 9320) protein is Hydrogenase maturation factor HypA.